Here is a 257-residue protein sequence, read N- to C-terminus: Phosphate import ATP-binding protein PstB (257 aa).

The ABC transporter domain occupies leucine 11 to isoleucine 252. Residue glycine 43–serine 50 coordinates ATP.

This sequence belongs to the ABC transporter superfamily. Phosphate importer (TC 3.A.1.7) family. The complex is composed of two ATP-binding proteins (PstB), two transmembrane proteins (PstC and PstA) and a solute-binding protein (PstS).

It localises to the cell inner membrane. It carries out the reaction phosphate(out) + ATP + H2O = ADP + 2 phosphate(in) + H(+). Part of the ABC transporter complex PstSACB involved in phosphate import. Responsible for energy coupling to the transport system. The chain is Phosphate import ATP-binding protein PstB from Chromobacterium violaceum (strain ATCC 12472 / DSM 30191 / JCM 1249 / CCUG 213 / NBRC 12614 / NCIMB 9131 / NCTC 9757 / MK).